Here is a 62-residue protein sequence, read N- to C-terminus: UPF0434 protein Tola_2233 (62 aa).

This sequence belongs to the UPF0434 family.

This is UPF0434 protein Tola_2233 from Tolumonas auensis (strain DSM 9187 / NBRC 110442 / TA 4).